Here is a 523-residue protein sequence, read N- to C-terminus: MHCSLNGDWSMQLNSTEISDLIKQRIESFNVVSEARNEGTIVSVSDGIIRIHGLADVMQGEMIELPGGRYALALNLERDSVGAVVMGPYADLKEGMKVTGTGRILEVPVGPELLGRVVNTLGEPIDGKGPIEAKLTSPVEVIAPGVIDRQSVDQPVQTGYKSVDSMIPIGRGQRELIIGDRQTGKTAMAIDAIINQKNSGIFSIYVAIGQKASTIANVVRKLEEHGALKNTIVVVASASESAALQYLAPYAGCAMGEYFRDRGEDALIVYDDLSKQAVAYRQISLLLKRPPGREAFPGDVFYLHSRLLERAARVNAEYVERFTNGEVKGKTGSLTALPIIETQAGDVSAFVPTNVISITDGQIFLQTELFNAGVRPAVDPGISVSRVGGSAQTKIIKKLSGGIRTALAAYRELAAFAQFSSDLDEATKRQLNHGQKVTELMKQKQYAPMSVFDQALTIFAAERGYLSDIELSKVLDFEAALLSYARGQYAELAAEIDKTGAYNDEIEAQLKKLTDDFKATQTW.

179–186 (GDRQTGKT) serves as a coordination point for ATP.

The protein belongs to the ATPase alpha/beta chains family. As to quaternary structure, F-type ATPases have 2 components, CF(1) - the catalytic core - and CF(0) - the membrane proton channel. CF(1) has five subunits: alpha(3), beta(3), gamma(1), delta(1), epsilon(1). CF(0) has three main subunits: a(1), b(2) and c(9-12). The alpha and beta chains form an alternating ring which encloses part of the gamma chain. CF(1) is attached to CF(0) by a central stalk formed by the gamma and epsilon chains, while a peripheral stalk is formed by the delta and b chains.

It localises to the cell inner membrane. The catalysed reaction is ATP + H2O + 4 H(+)(in) = ADP + phosphate + 5 H(+)(out). Its function is as follows. Produces ATP from ADP in the presence of a proton gradient across the membrane. The alpha chain is a regulatory subunit. The protein is ATP synthase subunit alpha of Vibrio vulnificus (strain YJ016).